We begin with the raw amino-acid sequence, 253 residues long: 3-isopropylmalate dehydratase small subunit 3 (253 aa).

The transit peptide at 1-56 directs the protein to the chloroplast; sequence MATSQQFLNPTLFKSLASSNKNSCTLCPSPFLQLKSASTIFNYKPLTSSSATIITR.

Belongs to the LeuD family. In terms of assembly, heterodimer of the large LEUC/IIL1 subunit and the small LEUD (SSU1, SSU2 or SSU3) subunits. In terms of tissue distribution, expressed in vascular bundles of roots, cotyledons and rosette leaves. Expressed in stem vascular bundles which branche off into lateral inflorescences. Expressed in connective tissues in anthers. In hypocotyls, expressed in parenchyma cells surrounding the vasculature. In rosette leaves, expressed in phloem cells and cells close to the xylem along the vascular bundles. In roots of adult plants, expressed in cells closely associated with the stele. In flowering stalks, expressed in parenchyma cells associated with the phloem or the xylem.

It localises to the plastid. The protein localises to the chloroplast stroma. The catalysed reaction is (2R,3S)-3-isopropylmalate = (2S)-2-isopropylmalate. It carries out the reaction a 2-(omega-methylsulfanyl)alkylmalate = a 2-(omega-methylsulfanyl)alkylmaleate + H2O. The enzyme catalyses 2-(3-methylsulfanyl)propylmalate = 2-(2-methylsulfanyl)propylmaleate + H2O. It catalyses the reaction a 3-(omega-methylsulfanyl)alkylmalate = a 2-(omega-methylsulfanyl)alkylmaleate + H2O. The catalysed reaction is 2-(2-methylsulfanyl)ethylmalate = 2-(2-methylsulfanyl)ethylmaleate + H2O. It carries out the reaction 3-(2-methylsulfanyl)ethylmalate = 2-(2-methylsulfanyl)ethylmaleate + H2O. The enzyme catalyses 3-(3-methylsulfanyl)propylmalate = 2-(2-methylsulfanyl)propylmaleate + H2O. It functions in the pathway amino-acid biosynthesis; L-leucine biosynthesis; L-leucine from 3-methyl-2-oxobutanoate: step 2/4. In terms of biological role, catalyzes the isomerization between 2-isopropylmalate and 3-isopropylmalate, via the formation of 2-isopropylmaleate. Functions redundantly with LEUD1 in the methionine chain elongation pathway of aliphatic glucosinolate formation. This chain is 3-isopropylmalate dehydratase small subunit 3, found in Arabidopsis thaliana (Mouse-ear cress).